Here is a 98-residue protein sequence, read N- to C-terminus: Large ribosomal subunit protein eL21 (98 aa).

It belongs to the eukaryotic ribosomal protein eL21 family.

The chain is Large ribosomal subunit protein eL21 from Korarchaeum cryptofilum (strain OPF8).